The sequence spans 146 residues: MKLTNYTDYSLRVLIFLAAERPGELSNIKQIAETYSISKNHLMKVIYRLGQLGYVETIRGRGGGIRLGMDPEDINIGEVVRKTEDDFNIVECFDANKNLCVISPVCGLKHVLNEALLAYLAVLDKYTLRDLVKNKEDIMKLLKMKE.

Positions K2–K133 constitute an HTH rrf2-type domain. The H-T-H motif DNA-binding region spans I28–Q51. [2Fe-2S] cluster contacts are provided by C92, C100, and C106.

[2Fe-2S] cluster serves as cofactor.

Its function is as follows. Nitric oxide-responsive transcriptional regulator. It represses the expression of flavohemoprotein hmp and the nitrite reductase nasD. Probably plays a role in the up-regulation of the resDE regulon in the presence of nitric oxide. The sequence is that of HTH-type transcriptional regulator NsrR (nsrR) from Bacillus subtilis (strain 168).